Consider the following 343-residue polypeptide: Methionine import ATP-binding protein MetN 1 (343 aa).

An ABC transporter domain is found at Ile2–Ile241. Gly38–Ser45 serves as a coordination point for ATP.

This sequence belongs to the ABC transporter superfamily. Methionine importer (TC 3.A.1.24) family. In terms of assembly, the complex is composed of two ATP-binding proteins (MetN), two transmembrane proteins (MetI) and a solute-binding protein (MetQ).

The protein resides in the cell inner membrane. It catalyses the reaction L-methionine(out) + ATP + H2O = L-methionine(in) + ADP + phosphate + H(+). The catalysed reaction is D-methionine(out) + ATP + H2O = D-methionine(in) + ADP + phosphate + H(+). Its function is as follows. Part of the ABC transporter complex MetNIQ involved in methionine import. Responsible for energy coupling to the transport system. This chain is Methionine import ATP-binding protein MetN 1, found in Salmonella paratyphi A (strain ATCC 9150 / SARB42).